We begin with the raw amino-acid sequence, 126 residues long: Large ribosomal subunit protein bL12 (126 aa).

This sequence belongs to the bacterial ribosomal protein bL12 family. Homodimer. Part of the ribosomal stalk of the 50S ribosomal subunit. Forms a multimeric L10(L12)X complex, where L10 forms an elongated spine to which 2 to 4 L12 dimers bind in a sequential fashion. Binds GTP-bound translation factors.

In terms of biological role, forms part of the ribosomal stalk which helps the ribosome interact with GTP-bound translation factors. Is thus essential for accurate translation. The protein is Large ribosomal subunit protein bL12 of Bifidobacterium longum subsp. infantis (strain ATCC 15697 / DSM 20088 / JCM 1222 / NCTC 11817 / S12).